The primary structure comprises 194 residues: Bis(5'-nucleosyl)-tetraphosphatase, symmetrical (194 aa).

In terms of domain architecture, HD spans 18–132 (RYNHSLRVAE…IFIADYIEPG (115 aa)). Residue His21 coordinates ADP. Fe cation contacts are provided by His21, His50, and Asp51. ADP-binding positions include 51–54 (DFCK), His83, 109–110 (HT), Asp127, Arg133, and 172–177 (TVYNKT). Asp127 is a Fe cation binding site.

The protein belongs to the Ap4A hydrolase YqeK family. In terms of assembly, homodimer.

The catalysed reaction is P(1),P(4)-bis(5'-adenosyl) tetraphosphate + H2O = 2 ADP + 2 H(+). Inhibited by EDTA. Functionally, hydrolyzes diadenosine 5',5'''-P1,P4-tetraphosphate (Ap4A) to yield ADP. Can also hydrolyze Ap3A, Ap5A, Ap4G, Ap4U and Gp4G, always releasing ADP or GDP as one of the products, but it exhibits a marked preference for Ap4A, which is mainly exerted at the substrate affinity level. The protein is Bis(5'-nucleosyl)-tetraphosphatase, symmetrical of Staphylococcus aureus (strain NCTC 8325 / PS 47).